The sequence spans 366 residues: Holliday junction branch migration complex subunit RuvB (366 aa).

The disordered stretch occupies residues 1–49 (MAIISSKKQPPEPNGQPNKRPESAPAAPKEKVLQPEAAIDEQGKQEESI). Residues 13–210 (PNGQPNKRPE…FGLIQKLRFY (198 aa)) form a large ATPase domain (RuvB-L) region. ATP is bound by residues Ile-49, Arg-50, Gly-91, Lys-94, Thr-95, Thr-96, 157 to 159 (EDY), Arg-200, Tyr-210, and Arg-247. Thr-95 serves as a coordination point for Mg(2+). The segment at 211 to 281 (EVDELSQIVL…IAAEALQLFQ (71 aa)) is small ATPAse domain (RuvB-S). The segment at 284 to 366 (PCGLDWTDRR…TPPNEQLSLL (83 aa)) is head domain (RuvB-H). Residues Arg-339 and Arg-344 each coordinate DNA.

This sequence belongs to the RuvB family. In terms of assembly, homohexamer. Forms an RuvA(8)-RuvB(12)-Holliday junction (HJ) complex. HJ DNA is sandwiched between 2 RuvA tetramers; dsDNA enters through RuvA and exits via RuvB. An RuvB hexamer assembles on each DNA strand where it exits the tetramer. Each RuvB hexamer is contacted by two RuvA subunits (via domain III) on 2 adjacent RuvB subunits; this complex drives branch migration. In the full resolvosome a probable DNA-RuvA(4)-RuvB(12)-RuvC(2) complex forms which resolves the HJ.

It localises to the cytoplasm. The catalysed reaction is ATP + H2O = ADP + phosphate + H(+). In terms of biological role, the RuvA-RuvB-RuvC complex processes Holliday junction (HJ) DNA during genetic recombination and DNA repair, while the RuvA-RuvB complex plays an important role in the rescue of blocked DNA replication forks via replication fork reversal (RFR). RuvA specifically binds to HJ cruciform DNA, conferring on it an open structure. The RuvB hexamer acts as an ATP-dependent pump, pulling dsDNA into and through the RuvAB complex. RuvB forms 2 homohexamers on either side of HJ DNA bound by 1 or 2 RuvA tetramers; 4 subunits per hexamer contact DNA at a time. Coordinated motions by a converter formed by DNA-disengaged RuvB subunits stimulates ATP hydrolysis and nucleotide exchange. Immobilization of the converter enables RuvB to convert the ATP-contained energy into a lever motion, pulling 2 nucleotides of DNA out of the RuvA tetramer per ATP hydrolyzed, thus driving DNA branch migration. The RuvB motors rotate together with the DNA substrate, which together with the progressing nucleotide cycle form the mechanistic basis for DNA recombination by continuous HJ branch migration. Branch migration allows RuvC to scan DNA until it finds its consensus sequence, where it cleaves and resolves cruciform DNA. The protein is Holliday junction branch migration complex subunit RuvB of Trichormus variabilis (strain ATCC 29413 / PCC 7937) (Anabaena variabilis).